A 306-amino-acid chain; its full sequence is sn-1-specific diacylglycerol lipase ABHD11 (306 aa).

The segment at 19–40 (GPSFARVPVAPSSSSGGRGGAE) is disordered. Over residues 23–33 (ARVPVAPSSSS) the composition is skewed to low complexity. An N6-succinyllysine modification is found at Lys78. Active-site charge relay system residues include Ser132, Asp228, and His287.

It belongs to the AB hydrolase superfamily. Interacts with OGDH and DLST; this interaction maintains the functional lipoylation of the 2-oxoglutarate dehydrogenase complex. Phosphorylated. In terms of tissue distribution, ubiquitously expressed. Highly expressed in small intestine, prostate and thyroid, while aorta and colon tissues exhibit weak expression levels.

The protein localises to the mitochondrion. Its subcellular location is the mitochondrion matrix. The catalysed reaction is 1-octadecanoyl-2-(5Z,8Z,11Z,14Z-eicosatetraenoyl)-sn-glycerol + H2O = 2-(5Z,8Z,11Z,14Z-eicosatetraenoyl)-glycerol + octadecanoate + H(+). The enzyme catalyses a 1,2-diacyl-sn-glycerol + H2O = a 2-acylglycerol + a fatty acid + H(+). It catalyses the reaction a 1,3-diacyl-sn-glycerol + H2O = a 1-acyl-sn-glycerol + a fatty acid + H(+). It carries out the reaction 1-octadecanoyl-2-(9Z-octadecenoyl)-sn-glycerol + H2O = 2-(9Z-octadecenoyl)-glycerol + octadecanoate + H(+). The catalysed reaction is 1-octadecanoyl-2-(4Z,7Z,10Z,13Z,16Z,19Z-docosahexaenoyl)-sn-glycerol + H2O = 2-(4Z,7Z,10Z,13Z,16Z,19Z-docosahexaenoyl)-glycerol + octadecanoate + H(+). The enzyme catalyses 1,2-didecanoylglycerol + H2O = decanoylglycerol + decanoate + H(+). In terms of biological role, catalyzes the hydrolysis of diacylglycerol in vitro and may function as a key regulator in lipid metabolism, namely by regulating the intracellular levels of diacylglycerol. 1,2-diacyl-sn-glycerols are the preferred substrate over 1,3-diacyl-sn-glycerols. The enzyme hydrolyzes stearate in preference to palmitate from the sn-1 position of 1,2-diacyl-sn-glycerols. Maintains the functional lipoylation of the 2-oxoglutarate dehydrogenase complex (OGDHc) through its interaction with the OGDHc by preventing the formation of lipoyl adducts. In addition, is also required for the expansion and differentiation of embryonic stem cells (ESCs). The polypeptide is sn-1-specific diacylglycerol lipase ABHD11 (Homo sapiens (Human)).